Consider the following 395-residue polypeptide: Zinc-regulated GTPase metalloprotein activator 1A (395 aa).

The segment at 1-22 (MLPAVGSADEEEDPAEEDCPEL) is disordered. Residues 8–20 (ADEEEDPAEEDCP) show a composition bias toward acidic residues. The psi-PxLVp motif signature appears at 17-24 (EDCPELVP). A GTP-binding site is contributed by 49 to 56 (GYLGAGKT). 3 residues coordinate Zn(2+): Cys-107, Cys-109, and Cys-110. A CXCC motif motif is present at residues 107-110 (CLCC). GTP is bound by residues 110–114 (CSVKD) and 203–206 (NKTD). The CobW C-terminal domain maps to 274–377 (IVTITFEVPG…ILKQLFIATV (104 aa)).

Belongs to the SIMIBI class G3E GTPase family. ZNG1 subfamily. In terms of tissue distribution, ubiquitously expressed. Up-regulated in cultured astrocytes treated with dopamine.

Its subcellular location is the nucleus. It carries out the reaction GTP + H2O = GDP + phosphate + H(+). Its function is as follows. Zinc chaperone that directly transfers zinc cofactor to target metalloproteins, thereby activating them. Catalyzes zinc insertion into the active site of methionine aminopeptidase METAP1, which function to cleave the initiator methionine from polypeptides during or after protein translation. Mechanistically, the N-terminal psi-PxLVp motif binds to the C6H2-type zinc finger of inactive form of METAP1. After formation of the docked complex, zinc is transferred from the CXCC motif in the GTPase domain of ZNG1A to the zinc binding site in the peptidase domain of METAP1 in a process requiring GTP hydrolysis. GTP/GDP exchange is required for release of active METAP1. The sequence is that of Zinc-regulated GTPase metalloprotein activator 1A from Homo sapiens (Human).